The sequence spans 190 residues: Fe/S biogenesis protein NfuA (190 aa).

[4Fe-4S] cluster-binding residues include C148 and C151.

The protein belongs to the NfuA family. Homodimer. [4Fe-4S] cluster is required as a cofactor.

Involved in iron-sulfur cluster biogenesis. Binds a 4Fe-4S cluster, can transfer this cluster to apoproteins, and thereby intervenes in the maturation of Fe/S proteins. Could also act as a scaffold/chaperone for damaged Fe/S proteins. This chain is Fe/S biogenesis protein NfuA, found in Baumannia cicadellinicola subsp. Homalodisca coagulata.